We begin with the raw amino-acid sequence, 547 residues long: Chaperonin GroEL 1 (547 aa).

ATP contacts are provided by residues 30 to 33 (TLGP), Lys-51, 87 to 91 (DGTTT), Gly-415, and Asp-496. A disordered region spans residues 525-547 (KPEPKSPAGGPGMGGMGGMDGMM). Positions 533–547 (GGPGMGGMGGMDGMM) are enriched in gly residues.

It belongs to the chaperonin (HSP60) family. In terms of assembly, forms a cylinder of 14 subunits composed of two heptameric rings stacked back-to-back. Interacts with the co-chaperonin GroES.

It localises to the cytoplasm. The enzyme catalyses ATP + H2O + a folded polypeptide = ADP + phosphate + an unfolded polypeptide.. Functionally, together with its co-chaperonin GroES, plays an essential role in assisting protein folding. The GroEL-GroES system forms a nano-cage that allows encapsulation of the non-native substrate proteins and provides a physical environment optimized to promote and accelerate protein folding. This chain is Chaperonin GroEL 1, found in Cereibacter sphaeroides (strain ATCC 17023 / DSM 158 / JCM 6121 / CCUG 31486 / LMG 2827 / NBRC 12203 / NCIMB 8253 / ATH 2.4.1.) (Rhodobacter sphaeroides).